The following is a 68-amino-acid chain: Conotoxin Vx2 (68 aa).

Residues 1–20 (MMSKLGVLVTICLLLFPLTA) form the signal peptide. A propeptide spanning residues 21-47 (LPLDGDQPADHPAKRTQDHNLASPISA) is cleaved from the precursor. Disulfide bonds link Cys55/Cys68, Cys56/Cys61, and Cys57/Cys65.

The protein belongs to the conotoxin M superfamily. Expressed by the venom duct.

The protein resides in the secreted. Its function is as follows. In vivo, elicits a series of symptoms, such as being sedative, tail stiffening and twisted jumping, when injected intracranially into mice. The polypeptide is Conotoxin Vx2 (Conus vexillum (Flag cone)).